The primary structure comprises 620 residues: Chaperone protein DnaK (620 aa).

The residue at position 174 (T174) is a Phosphothreonine; by autocatalysis. Residues 590–620 (AAGAGPDMSGAGPQGDTYAGDDVVDGDYREV) are disordered.

It belongs to the heat shock protein 70 family.

Acts as a chaperone. The chain is Chaperone protein DnaK from Lachnoclostridium phytofermentans (strain ATCC 700394 / DSM 18823 / ISDg) (Clostridium phytofermentans).